A 602-amino-acid polypeptide reads, in one-letter code: DNA ligase (602 aa).

ATP is bound at residue Glu262. The active-site N6-AMP-lysine intermediate is Lys264. ATP-binding residues include Arg269, Arg284, Glu314, Phe354, Arg431, and Lys437.

It belongs to the ATP-dependent DNA ligase family. As to quaternary structure, monomer. Mg(2+) serves as cofactor. The cofactor is Mn(2+).

It carries out the reaction ATP + (deoxyribonucleotide)n-3'-hydroxyl + 5'-phospho-(deoxyribonucleotide)m = (deoxyribonucleotide)n+m + AMP + diphosphate.. The catalysed reaction is ADP + (deoxyribonucleotide)n-3'-hydroxyl + 5'-phospho-(deoxyribonucleotide)m = (deoxyribonucleotide)n+m + AMP + phosphate.. It catalyses the reaction GTP + (deoxyribonucleotide)n-3'-hydroxyl + 5'-phospho-(deoxyribonucleotide)m = (deoxyribonucleotide)n+m + GMP + diphosphate.. Its activity is regulated as follows. Inhibited in the presence of 100 mM KCl, NaCl or NH(4)Cl. Functionally, DNA ligase that seals nicks in double-stranded DNA during DNA replication, DNA recombination and DNA repair. Can also use ADP, but not NAD(+). The sequence is that of DNA ligase from Aeropyrum pernix (strain ATCC 700893 / DSM 11879 / JCM 9820 / NBRC 100138 / K1).